We begin with the raw amino-acid sequence, 85 residues long: U4-theraphotoxin-Hhn1a (85 aa).

An N-terminal signal peptide occupies residues 1 to 22 (MKVTLIAILTCAAVLVLHTTAE). Positions 23-48 (EELEAESQLMEVGMPDTELAAVDEER) are excised as a propeptide. 3 disulfide bridges follow: cysteine 52/cysteine 66, cysteine 56/cysteine 77, and cysteine 71/cysteine 82.

It belongs to the neurotoxin 12 (Hwtx-2) family. 02 (Hwtx-2) subfamily. As to quaternary structure, monomer. Expressed by the venom gland.

It localises to the secreted. In terms of biological role, neurotoxin active on both insects and mammals. This chain is U4-theraphotoxin-Hhn1a, found in Cyriopagopus hainanus (Chinese bird spider).